The chain runs to 92 residues: Small ribosomal subunit protein uS19 (92 aa).

Belongs to the universal ribosomal protein uS19 family.

In terms of biological role, protein S19 forms a complex with S13 that binds strongly to the 16S ribosomal RNA. In Lysinibacillus sphaericus (strain C3-41), this protein is Small ribosomal subunit protein uS19.